Here is a 220-residue protein sequence, read N- to C-terminus: Fibroblast growth factor 3 (220 aa).

An N-terminal signal peptide occupies residues 1–19; sequence MLVIWLLLLALLPEPRVPA. Positions 19-40 are disordered; that stretch reads AATASPRAPRDAGGRGGVYEHL. Residue N66 is glycosylated (N-linked (GlcNAc...) asparagine).

Belongs to the heparin-binding growth factors family.

It localises to the secreted. Plays an important role in the regulation of embryonic development, cell proliferation, and cell differentiation. In Gallus gallus (Chicken), this protein is Fibroblast growth factor 3 (FGF3).